The following is a 262-amino-acid chain: Phosphonates import ATP-binding protein PhnC (262 aa).

An ABC transporter domain is found at 5-253; it reads IRVEKLAKTF…RFDHLYRSIN (249 aa). 37–44 is an ATP binding site; that stretch reads GPSGSGKS.

It belongs to the ABC transporter superfamily. Phosphonates importer (TC 3.A.1.9.1) family. In terms of assembly, the complex is composed of two ATP-binding proteins (PhnC), two transmembrane proteins (PhnE) and a solute-binding protein (PhnD).

The protein resides in the cell inner membrane. The catalysed reaction is phosphonate(out) + ATP + H2O = phosphonate(in) + ADP + phosphate + H(+). Part of the ABC transporter complex PhnCDE involved in phosphonates import. Responsible for energy coupling to the transport system. This Shigella boydii serotype 4 (strain Sb227) protein is Phosphonates import ATP-binding protein PhnC.